A 194-amino-acid polypeptide reads, in one-letter code: 22 kDa relaxation protein (194 aa).

Functionally, this protein is probably required for relaxation complex formation. The chain is 22 kDa relaxation protein from Salmonella typhimurium.